The chain runs to 507 residues: Dihydrolipoyl dehydrogenase 2, mitochondrial (507 aa).

The N-terminal 36 residues, methionine 1–phenylalanine 36, are a transit peptide targeting the mitochondrion. FAD is bound by residues glutamate 73–cysteine 82, lysine 91, glycine 155, and threonine 184–serine 186. An intrachain disulfide couples cysteine 82 to cysteine 87. Residues glycine 221 to glutamate 228, glutamate 244, valine 278, and glycine 313 each bind NAD(+). FAD-binding positions include aspartate 354 and methionine 360–histidine 363. Catalysis depends on histidine 486, which acts as the Proton acceptor.

Belongs to the class-I pyridine nucleotide-disulfide oxidoreductase family. In terms of assembly, homodimer. Part of both the glycine cleavage system composed of four proteins: P, T, L and H and of the pyruvate dehydrogenase complex containing multiple copies of three enzymatic components: pyruvate dehydrogenase (E1), dihydrolipoamide acetyltransferase (E2) and lipoamide dehydrogenase (E3). It depends on FAD as a cofactor. In terms of processing, S-nytrosylated at unknown positions. Preferentially expressed in roots, flowers and siliques and at a lower level in stems and leaves.

It localises to the mitochondrion matrix. It catalyses the reaction N(6)-[(R)-dihydrolipoyl]-L-lysyl-[protein] + NAD(+) = N(6)-[(R)-lipoyl]-L-lysyl-[protein] + NADH + H(+). In terms of biological role, lipoamide dehydrogenase is a component of the glycine decarboxylase (GDC) or glycine cleavage system as well as of the alpha-ketoacid dehydrogenase complexes. LPD1 is probably the protein most often associated with the glycine decarboxylase complex while LPD2 is probably incorporated into alpha-ketoacid dehydrogenase complexes. This is Dihydrolipoyl dehydrogenase 2, mitochondrial (LPD2) from Arabidopsis thaliana (Mouse-ear cress).